Here is a 356-residue protein sequence, read N- to C-terminus: 3-dehydroquinate synthase (356 aa).

NAD(+)-binding positions include 106–110 (GVVGD), 130–131 (TT), K143, and K152. Zn(2+) is bound by residues E185, H248, and H265.

This sequence belongs to the sugar phosphate cyclases superfamily. Dehydroquinate synthase family. NAD(+) serves as cofactor. It depends on Co(2+) as a cofactor. Zn(2+) is required as a cofactor.

It localises to the cytoplasm. It carries out the reaction 7-phospho-2-dehydro-3-deoxy-D-arabino-heptonate = 3-dehydroquinate + phosphate. The protein operates within metabolic intermediate biosynthesis; chorismate biosynthesis; chorismate from D-erythrose 4-phosphate and phosphoenolpyruvate: step 2/7. Its function is as follows. Catalyzes the conversion of 3-deoxy-D-arabino-heptulosonate 7-phosphate (DAHP) to dehydroquinate (DHQ). The protein is 3-dehydroquinate synthase of Caldanaerobacter subterraneus subsp. tengcongensis (strain DSM 15242 / JCM 11007 / NBRC 100824 / MB4) (Thermoanaerobacter tengcongensis).